A 514-amino-acid polypeptide reads, in one-letter code: Alpha-1,3/1,6-mannosyltransferase ALG2 (514 aa).

Residue Asn-94 is glycosylated (N-linked (GlcNAc...) asparagine). 2 consecutive transmembrane segments (helical) span residues Trp-443–Gly-463 and Tyr-468–Val-490.

This sequence belongs to the glycosyltransferase group 1 family.

It is found in the endoplasmic reticulum membrane. The catalysed reaction is a beta-D-Man-(1-&gt;4)-beta-D-GlcNAc-(1-&gt;4)-alpha-D-GlcNAc-diphospho-di-trans,poly-cis-dolichol + GDP-alpha-D-mannose = an alpha-D-Man-(1-&gt;3)-beta-D-Man-(1-&gt;4)-beta-D-GlcNAc-(1-&gt;4)-alpha-D-GlcNAc-diphospho-di-trans,poly-cis-dolichol + GDP + H(+). It carries out the reaction an alpha-D-Man-(1-&gt;3)-beta-D-Man-(1-&gt;4)-beta-D-GlcNAc-(1-&gt;4)-alpha-D-GlcNAc-diphospho-di-trans,poly-cis-dolichol + GDP-alpha-D-mannose = an alpha-D-Man-(1-&gt;3)-[alpha-D-Man-(1-&gt;6)]-beta-D-Man-(1-&gt;4)-beta-D-GlcNAc-(1-&gt;4)-alpha-D-GlcNAc-diphospho-di-trans,poly-cis-dolichol + GDP + H(+). It participates in protein modification; protein glycosylation. Functionally, mannosylates Man(2)GlcNAc(2)-dolichol diphosphate and Man(1)GlcNAc(2)-dolichol diphosphate to form Man(3)GlcNAc(2)-dolichol diphosphate. The sequence is that of Alpha-1,3/1,6-mannosyltransferase ALG2 (ALG2) from Eremothecium gossypii (strain ATCC 10895 / CBS 109.51 / FGSC 9923 / NRRL Y-1056) (Yeast).